The sequence spans 315 residues: Aspartate carbamoyltransferase catalytic subunit (315 aa).

2 residues coordinate carbamoyl phosphate: Arg-65 and Thr-66. L-aspartate is bound at residue Lys-93. Carbamoyl phosphate-binding residues include Arg-115, His-143, and Gln-146. L-aspartate is bound by residues Arg-176 and Arg-231. Gly-272 and Pro-273 together coordinate carbamoyl phosphate.

Belongs to the aspartate/ornithine carbamoyltransferase superfamily. ATCase family. As to quaternary structure, heterododecamer (2C3:3R2) of six catalytic PyrB chains organized as two trimers (C3), and six regulatory PyrI chains organized as three dimers (R2).

The enzyme catalyses carbamoyl phosphate + L-aspartate = N-carbamoyl-L-aspartate + phosphate + H(+). Its pathway is pyrimidine metabolism; UMP biosynthesis via de novo pathway; (S)-dihydroorotate from bicarbonate: step 2/3. Functionally, catalyzes the condensation of carbamoyl phosphate and aspartate to form carbamoyl aspartate and inorganic phosphate, the committed step in the de novo pyrimidine nucleotide biosynthesis pathway. The polypeptide is Aspartate carbamoyltransferase catalytic subunit (Hyphomonas neptunium (strain ATCC 15444)).